A 427-amino-acid chain; its full sequence is 3-phosphoshikimate 1-carboxyvinyltransferase (427 aa).

Lys20, Ser21, and Arg25 together coordinate 3-phosphoshikimate. Position 20 (Lys20) interacts with phosphoenolpyruvate. 2 residues coordinate phosphoenolpyruvate: Gly92 and Arg120. 4 residues coordinate 3-phosphoshikimate: Ser166, Gln168, Asp312, and Lys339. Gln168 is a phosphoenolpyruvate binding site. Asp312 acts as the Proton acceptor in catalysis. Arg343 and Arg385 together coordinate phosphoenolpyruvate.

Belongs to the EPSP synthase family. As to quaternary structure, monomer.

Its subcellular location is the cytoplasm. The enzyme catalyses 3-phosphoshikimate + phosphoenolpyruvate = 5-O-(1-carboxyvinyl)-3-phosphoshikimate + phosphate. It functions in the pathway metabolic intermediate biosynthesis; chorismate biosynthesis; chorismate from D-erythrose 4-phosphate and phosphoenolpyruvate: step 6/7. Its function is as follows. Catalyzes the transfer of the enolpyruvyl moiety of phosphoenolpyruvate (PEP) to the 5-hydroxyl of shikimate-3-phosphate (S3P) to produce enolpyruvyl shikimate-3-phosphate and inorganic phosphate. In Streptococcus pneumoniae serotype 19F (strain G54), this protein is 3-phosphoshikimate 1-carboxyvinyltransferase.